The following is a 403-amino-acid chain: Tryptophan synthase beta chain (403 aa).

N6-(pyridoxal phosphate)lysine is present on lysine 87.

It belongs to the TrpB family. Tetramer of two alpha and two beta chains. Pyridoxal 5'-phosphate is required as a cofactor.

It catalyses the reaction (1S,2R)-1-C-(indol-3-yl)glycerol 3-phosphate + L-serine = D-glyceraldehyde 3-phosphate + L-tryptophan + H2O. It functions in the pathway amino-acid biosynthesis; L-tryptophan biosynthesis; L-tryptophan from chorismate: step 5/5. In terms of biological role, the beta subunit is responsible for the synthesis of L-tryptophan from indole and L-serine. This chain is Tryptophan synthase beta chain, found in Shewanella loihica (strain ATCC BAA-1088 / PV-4).